A 305-amino-acid polypeptide reads, in one-letter code: Homoserine kinase (305 aa).

95-105 lines the ATP pocket; the sequence is PHGRGLGSSSA.

The protein belongs to the GHMP kinase family. Homoserine kinase subfamily.

The protein resides in the cytoplasm. It carries out the reaction L-homoserine + ATP = O-phospho-L-homoserine + ADP + H(+). It functions in the pathway amino-acid biosynthesis; L-threonine biosynthesis; L-threonine from L-aspartate: step 4/5. Catalyzes the ATP-dependent phosphorylation of L-homoserine to L-homoserine phosphate. The chain is Homoserine kinase from Streptomyces avermitilis (strain ATCC 31267 / DSM 46492 / JCM 5070 / NBRC 14893 / NCIMB 12804 / NRRL 8165 / MA-4680).